Reading from the N-terminus, the 355-residue chain is Gibberellin 3-beta-dioxygenase 4 (355 aa).

Residues 203–303 enclose the Fe2OG dioxygenase domain; it reads GRGAIRLNHY…RISIAYLWGG (101 aa). Fe cation contacts are provided by H227, D229, and H284. R294 is an active-site residue.

Belongs to the iron/ascorbate-dependent oxidoreductase family. GA3OX subfamily. L-ascorbate is required as a cofactor. Fe cation serves as cofactor. As to expression, expressed in siliques and in seeds, specifically at the rim of the embryo and the outer integument. Also expressed in flowers. Not detected in roots, stems and leaves.

The enzyme catalyses gibberellin A20 + 2-oxoglutarate + O2 = gibberellin A1 + succinate + CO2. It participates in plant hormone biosynthesis; gibberellin biosynthesis. Functionally, converts the inactive gibberellin (GA) precursors GA9 and GA20 in the bioactives gibberellins GA4 and GA1. Involved in the production of bioactive GA for reproductive development. This Arabidopsis thaliana (Mouse-ear cress) protein is Gibberellin 3-beta-dioxygenase 4.